The following is a 408-amino-acid chain: MLTKQTTGQAWKQIKGSITDVKGFTTAGAHCGLKRKRLDIGAIFCDVPANAAGVFTLNQIQAAPLKVTKESLAHSNGKLQAVLVNSGNANACTGASGLVDAYEMRALAAAKFAVPEEMVAVTSTGVIGEKMPMEKVRSGIEDLVLSKESTPFAEAILTTDTGTKEVCVEVVIDQKTVRIAGVAKGSGMIHPNMATMLGFITTDANIETAALKRALAKATDETFNRITVDGDTSTNDMVLVLASGLADNQPLDETHPDWANFYGALSACAESLAKKIAKDGEGATKLIEVQVAGAVSDEEAGKVAKAIVGSDLVKTAAYGKDGNWGRIICAIGYSGCTLDPDTIDIAIGPYETLVQSEPVVVDDAAISKYMEAETIVIKADLHQGQGVGKAWGCDLTYDYVRINAGYRT.

Residues Thr-158, Lys-184, Thr-195, Glu-281, Asn-403, and Thr-408 each contribute to the substrate site. Thr-195 serves as the catalytic Nucleophile.

Belongs to the ArgJ family. Heterotetramer of two alpha and two beta chains.

It localises to the cytoplasm. The catalysed reaction is N(2)-acetyl-L-ornithine + L-glutamate = N-acetyl-L-glutamate + L-ornithine. It catalyses the reaction L-glutamate + acetyl-CoA = N-acetyl-L-glutamate + CoA + H(+). It functions in the pathway amino-acid biosynthesis; L-arginine biosynthesis; L-ornithine and N-acetyl-L-glutamate from L-glutamate and N(2)-acetyl-L-ornithine (cyclic): step 1/1. It participates in amino-acid biosynthesis; L-arginine biosynthesis; N(2)-acetyl-L-ornithine from L-glutamate: step 1/4. Its function is as follows. Catalyzes two activities which are involved in the cyclic version of arginine biosynthesis: the synthesis of N-acetylglutamate from glutamate and acetyl-CoA as the acetyl donor, and of ornithine by transacetylation between N(2)-acetylornithine and glutamate. In Shouchella clausii (strain KSM-K16) (Alkalihalobacillus clausii), this protein is Arginine biosynthesis bifunctional protein ArgJ.